Consider the following 271-residue polypeptide: Mannosyl-3-phosphoglycerate phosphatase (271 aa).

The Nucleophile role is filled by Asp-13. Positions 13, 15, and 214 each coordinate Mg(2+).

This sequence belongs to the HAD-like hydrolase superfamily. MPGP family. Mg(2+) serves as cofactor.

The protein localises to the cytoplasm. It carries out the reaction 2-O-(alpha-D-mannosyl)-3-phosphoglycerate + H2O = (2R)-2-O-(alpha-D-mannosyl)-glycerate + phosphate. The chain is Mannosyl-3-phosphoglycerate phosphatase from Escherichia coli O127:H6 (strain E2348/69 / EPEC).